Here is a 1130-residue protein sequence, read N- to C-terminus: Transmembrane channel-like protein 3 (1130 aa).

The Cytoplasmic portion of the chain corresponds to 1 to 148; that stretch reads MKTSKASQRY…ASYFIFLRWL (148 aa). A helical membrane pass occupies residues 149 to 169; sequence FGINIVLTVMTGAFVVLPELI. Over 170 to 192 the chain is Extracellular; it reads AGQPFGSTASKTIPREQITSAQD. The chain crosses the membrane as a helical span at residues 193–213; that stretch reads LDTVWSLGGYLQYSVLFYGYY. Over 214–225 the chain is Cytoplasmic; it reads GRERRIGRAGYR. A helical membrane pass occupies residues 226 to 246; the sequence is LPLAYFLVGMAVFAYSFIVLL. At 247–319 the chain is on the extracellular side; it reads KRMAKNSRTS…KNMAVTVCLR (73 aa). N-linked (GlcNAc...) asparagine glycosylation is present at N264. Residues 320 to 340 traverse the membrane as a helical segment; sequence IIANILVLLSLAGSIYLIYFV. Residues 341 to 361 are Cytoplasmic-facing; sequence VDRSQKLEQSKKELTLWEKNE. The helical transmembrane segment at 362–382 threads the bilayer; that stretch reads VSVVVSLVTMLAPSAFDLIAA. Residues 383–393 lie on the Extracellular side of the membrane; it reads LEMYHPRTTLR. The chain crosses the membrane as a helical span at residues 394-414; sequence FQLARVLVLYLGNLYSLIIAL. At 415–509 the chain is on the cytoplasmic side; sequence LDKVNSMNIE…CWETYVGQEM (95 aa). The helical transmembrane segment at 510–530 threads the bilayer; it reads LKLSVIDMLFTVASILLIDFF. The Extracellular portion of the chain corresponds to 531–570; it reads RGLFVRYLSDYWCWDLESKFPEYGEFKIAENVLHLVYNQG. A helical membrane pass occupies residues 571–591; sequence MIWMGAFFSPCLPAFNVLKLI. The Cytoplasmic portion of the chain corresponds to 592-619; the sequence is GLMYLRSWAVLTCNVPHQQVFRASRSNN. The chain crosses the membrane as a helical span at residues 620 to 640; the sequence is FYLAMLLFMLFLCMLPTIFAI. At 641–680 the chain is on the extracellular side; that stretch reads VHYKPSLNCGPFSGQEKIYDIVSETIENDFPTWFHAVVGH. The chain crosses the membrane as a helical span at residues 681 to 701; sequence ISSPVVILPAVLLLFMLIYYL. Topologically, residues 702-1130 are cytoplasmic; sequence QSIARSLKLS…DLNDLICSNV (429 aa). Disordered regions lie at residues 742 to 774, 819 to 893, 999 to 1019, 1033 to 1059, and 1097 to 1116; these read DARQAGSATEAESSENSKPKTLQARIQTHEESS, RSLP…FQPI, SSCFYTGDRSENNTRDPKYQR, QLERPTFVHRKPRSRNGQYPQHALKAR, and QGRFPRSASQLGRRKAKSRQ. Residues 747-767 are compositionally biased toward polar residues; that stretch reads GSATEAESSENSKPKTLQARI. Over residues 840 to 850 the composition is skewed to basic and acidic residues; the sequence is SRSRPEQDTNR. Positions 856-876 are enriched in polar residues; sequence CSSTSNLHKNRSCSSVTQTQP. Basic and acidic residues-rich tracts occupy residues 878-890 and 1006-1017; these read KDVRSEPLSRKDF and DRSENNTRDPKY. Positions 1097-1106 are enriched in polar residues; that stretch reads QGRFPRSASQ.

This sequence belongs to the TMC family. As to expression, detected in most neuronal organs and also in some non-neuronal tissues.

It is found in the membrane. Its function is as follows. Probable component of an ion channel. Molecular function hasn't been characterized yet. The sequence is that of Transmembrane channel-like protein 3 from Mus musculus (Mouse).